We begin with the raw amino-acid sequence, 437 residues long: Phosphomethylpyrimidine synthase (437 aa).

Residues Asn69, Met98, Tyr127, His163, Ser185–Gly187, Asp226–Arg229, and Glu265 contribute to the substrate site. Residue His269 coordinates Zn(2+). Residue Tyr292 participates in substrate binding. His333 contributes to the Zn(2+) binding site. Positions 409, 412, and 416 each coordinate [4Fe-4S] cluster.

The protein belongs to the ThiC family. [4Fe-4S] cluster serves as cofactor.

It catalyses the reaction 5-amino-1-(5-phospho-beta-D-ribosyl)imidazole + S-adenosyl-L-methionine = 4-amino-2-methyl-5-(phosphooxymethyl)pyrimidine + CO + 5'-deoxyadenosine + formate + L-methionine + 3 H(+). The protein operates within cofactor biosynthesis; thiamine diphosphate biosynthesis. In terms of biological role, catalyzes the synthesis of the hydroxymethylpyrimidine phosphate (HMP-P) moiety of thiamine from aminoimidazole ribotide (AIR) in a radical S-adenosyl-L-methionine (SAM)-dependent reaction. This chain is Phosphomethylpyrimidine synthase, found in Clostridium botulinum (strain Loch Maree / Type A3).